Here is an 88-residue protein sequence, read N- to C-terminus: MLSSDQRGSIIENYQLHEKDTGSPEVQIALLSARIEYLTDHFKVHKKDHHSRRGLLKLVGQRRRLLDYLKNKNIERYRQVIQRLGLRK.

The protein belongs to the universal ribosomal protein uS15 family. In terms of assembly, part of the 30S ribosomal subunit. Forms a bridge to the 50S subunit in the 70S ribosome, contacting the 23S rRNA.

Its function is as follows. One of the primary rRNA binding proteins, it binds directly to 16S rRNA where it helps nucleate assembly of the platform of the 30S subunit by binding and bridging several RNA helices of the 16S rRNA. Forms an intersubunit bridge (bridge B4) with the 23S rRNA of the 50S subunit in the ribosome. The chain is Small ribosomal subunit protein uS15 from Syntrophus aciditrophicus (strain SB).